Reading from the N-terminus, the 444-residue chain is Alpha-N-acetylgalactosaminidase (444 aa).

Residues 30–31, Asp52, Asn80, 101–104, His107, 121–122, and Asn150 each bind NAD(+); these read LR, WEWH, and EV. Residue Tyr179 coordinates substrate. 208–212 serves as a coordination point for NAD(+); it reads SEAKW. Substrate-binding positions include Arg213, 225–228, and Tyr307; that span reads YPTH. Position 225 (Tyr225) interacts with NAD(+).

The protein belongs to the Gfo/Idh/MocA family. Glycosyl hydrolase 109 subfamily. Requires NAD(+) as cofactor.

The enzyme catalyses Cleavage of non-reducing alpha-(1-&gt;3)-N-acetylgalactosamine residues from human blood group A and AB mucin glycoproteins, Forssman hapten and blood group A lacto series glycolipids.. In terms of biological role, glycosidase that has specific alpha-N-acetylgalactosaminidase activity. The sequence is that of Alpha-N-acetylgalactosaminidase (nagA) from Elizabethkingia meningoseptica (Chryseobacterium meningosepticum).